The primary structure comprises 147 residues: Hemoglobin subunit beta (147 aa).

The residue at position 2 (Val-2) is an N-acetylvaline. Residues 3–147 form the Globin domain; that stretch reads HLTGEEKAAV…VANALAHKYH (145 aa). Position 13 is a phosphothreonine (Thr-13). Ser-45 carries the post-translational modification Phosphoserine. Lys-60 carries the post-translational modification N6-acetyllysine. His-64 contacts heme b. Lys-83 bears the N6-acetyllysine mark. His-93 serves as a coordination point for heme b. The residue at position 94 (Cys-94) is an S-nitrosocysteine. Lys-145 carries the N6-acetyllysine modification.

This sequence belongs to the globin family. Heterotetramer of two alpha chains and two beta chains. As to expression, red blood cells.

Involved in oxygen transport from the lung to the various peripheral tissues. The chain is Hemoglobin subunit beta (HBB) from Cheracebus torquatus (Collared titi monkey).